Here is a 122-residue protein sequence, read N- to C-terminus: Basic phospholipase A2 vipoxin B chain (122 aa).

7 disulfides stabilise this stretch: Cys26–Cys115, Cys28–Cys44, Cys43–Cys95, Cys49–Cys122, Cys50–Cys88, Cys57–Cys81, and Cys75–Cys86. Residues Tyr27, Gly29, and Gly31 each coordinate Ca(2+). His47 is a catalytic residue. Asp48 serves as a coordination point for Ca(2+). Asp89 is an active-site residue.

This sequence belongs to the phospholipase A2 family. Group II subfamily. D49 sub-subfamily. Heterodimer of A (AC P04084) and B chains; non-covalently linked. The A chain (acidic) is non-toxic, and increases the toxicity of the B chain (basic). The A chain may act as factor stabilizing the complex structure and hence retaining its toxicity by preventing non-specific binding. Upon binding to the target membranes the A chain is postulated to dissociate. Requires Ca(2+) as cofactor. In terms of tissue distribution, expressed by the venom gland.

It is found in the secreted. It carries out the reaction a 1,2-diacyl-sn-glycero-3-phosphocholine + H2O = a 1-acyl-sn-glycero-3-phosphocholine + a fatty acid + H(+). Heterodimer: postsynaptic neurotoxin. Functionally, monomer: snake venom phospholipase A2 (PLA2) that shows hemolytic activity and inhibition of platelet aggregation. The hemolytic activity occurs only in presence of fatty acids (unsaturated fatty acids facilitate induce a strong hemolytic activity, whereas saturated fatty acids induce a slight activity). The inhibition of platelet aggregation is almost maximal when aggregation is induced by collagen, and arachidonic acid, whereas it is only of 30% when the aggregation is induced by ADP. PLA2 catalyzes the calcium-dependent hydrolysis of the 2-acyl groups in 3-sn-phosphoglycerides. The sequence is that of Basic phospholipase A2 vipoxin B chain from Vipera ammodytes meridionalis (Eastern sand viper).